Consider the following 442-residue polypeptide: Tubulin beta chain (442 aa).

Residues Gln-11, Glu-69, Ser-138, Gly-142, Thr-143, Gly-144, Asn-204, and Asn-226 each contribute to the GTP site. Mg(2+) is bound at residue Glu-69. Positions 421–442 (EYQQYQDATAEDEEEMDEEQME) are disordered. Residues 429–442 (TAEDEEEMDEEQME) show a composition bias toward acidic residues.

Belongs to the tubulin family. Dimer of alpha and beta chains. A typical microtubule is a hollow water-filled tube with an outer diameter of 25 nm and an inner diameter of 15 nM. Alpha-beta heterodimers associate head-to-tail to form protofilaments running lengthwise along the microtubule wall with the beta-tubulin subunit facing the microtubule plus end conferring a structural polarity. Microtubules usually have 13 protofilaments but different protofilament numbers can be found in some organisms and specialized cells. Requires Mg(2+) as cofactor.

The protein resides in the cytoplasm. Its subcellular location is the cytoskeleton. Its function is as follows. Tubulin is the major constituent of microtubules, a cylinder consisting of laterally associated linear protofilaments composed of alpha- and beta-tubulin heterodimers. Microtubules grow by the addition of GTP-tubulin dimers to the microtubule end, where a stabilizing cap forms. Below the cap, tubulin dimers are in GDP-bound state, owing to GTPase activity of alpha-tubulin. The sequence is that of Tubulin beta chain (TUBB1) from Stylonychia lemnae (Ciliate).